A 362-amino-acid polypeptide reads, in one-letter code: Chorismate synthase (362 aa).

Residues Arg48 and Arg54 each contribute to the NADP(+) site. Residues 125 to 127 (RSS), 237 to 238 (NA), Gly277, 292 to 296 (KPTSS), and Arg318 contribute to the FMN site.

This sequence belongs to the chorismate synthase family. In terms of assembly, homotetramer. It depends on FMNH2 as a cofactor.

It catalyses the reaction 5-O-(1-carboxyvinyl)-3-phosphoshikimate = chorismate + phosphate. It participates in metabolic intermediate biosynthesis; chorismate biosynthesis; chorismate from D-erythrose 4-phosphate and phosphoenolpyruvate: step 7/7. In terms of biological role, catalyzes the anti-1,4-elimination of the C-3 phosphate and the C-6 proR hydrogen from 5-enolpyruvylshikimate-3-phosphate (EPSP) to yield chorismate, which is the branch point compound that serves as the starting substrate for the three terminal pathways of aromatic amino acid biosynthesis. This reaction introduces a second double bond into the aromatic ring system. The sequence is that of Chorismate synthase from Idiomarina loihiensis (strain ATCC BAA-735 / DSM 15497 / L2-TR).